Reading from the N-terminus, the 1482-residue chain is Calcium-dependent protein kinase 6 (1482 aa).

2 disordered regions span residues 250–320 (TNNY…IRPN) and 739–760 (SENFSNNFNDNKQKSLKNDDSN). Residues 254–264 (AHDNNQDSNSY) are compositionally biased toward polar residues. The span at 277–301 (EEDNDTGDTYADNEEDEDNRDDNDD) shows a compositional bias: acidic residues. Over residues 302-318 (YSQYNQCEVESDTNQIR) the composition is skewed to polar residues. Residues 739–748 (SENFSNNFND) are compositionally biased toward low complexity. The segment covering 749–760 (NKQKSLKNDDSN) has biased composition (basic and acidic residues). EF-hand domains lie at 931 to 966 (IFERSARATFKQFDVKNKNFLHFSEIESLIQKLCYN) and 972 to 1007 (VDKKILSIVYKDYDSSKNNCMNYMDFRQMYWDLLKQ). Ca(2+) is bound by residues D985, S987, N989, C991, and D996. A Protein kinase domain is found at 1043–1295 (LSFKKILGCG…AAVLLHHPWF (253 aa)). ATP contacts are provided by residues 1049–1057 (LGCGAFGEV) and K1072. The active-site Proton acceptor is D1162. EF-hand domains follow at residues 1338–1373 (NHVKYINDIFLKIDSNHNGSLSHREIYNVLSNAGVK), 1376–1406 (DINRIIQALDVNDKGCITYTEFIAGCYRWKN), 1407–1442 (IDSTFLKAAFNKIDKDEDGYISKSDLATLVHDNGVN), and 1468–1482 (KISFEDFKDYMLSTF). Ca(2+) contacts are provided by D1351, N1353, N1355, S1357, and E1362. 5 residues coordinate Ca(2+): D1420, D1422, D1424, Y1426, and D1431.

This sequence belongs to the protein kinase superfamily. Ser/Thr protein kinase family. CDPK subfamily. It depends on Mg(2+) as a cofactor.

The catalysed reaction is L-seryl-[protein] + ATP = O-phospho-L-seryl-[protein] + ADP + H(+). The enzyme catalyses L-threonyl-[protein] + ATP = O-phospho-L-threonyl-[protein] + ADP + H(+). Activated by calcium. Calcium-dependent protein kinase which acts as a sensor and effector of intracellular Ca(2+) levels. In sporozoites, probably involved in the secretion of the cysteine protease that cleaves circumsporozoite protein CSP, thereby exposing CSP TSR domain, which binds with high affinity to highly sulfated heparan sulfate proteoglycans (HSPGs), resulting in productive invasion of the host hepatocytes. The sequence is that of Calcium-dependent protein kinase 6 from Plasmodium berghei (strain Anka).